The chain runs to 437 residues: Adenylosuccinate synthetase (437 aa).

GTP is bound by residues 25–31 (GDEGKGK), 53–55 (GHT), and lysine 62. Aspartate 26 (proton acceptor) is an active-site residue. Positions 26 and 53 each coordinate Mg(2+). IMP is bound by residues 26–29 (DEGK) and 51–54 (NAGH). Histidine 54 functions as the Proton donor in the catalytic mechanism. IMP-binding residues include threonine 141, arginine 155, asparagine 232, and threonine 247. Threonine 307 provides a ligand contact to GTP. Substrate is bound at residue 307–313 (TTTKRPR). Arginine 311 provides a ligand contact to IMP. GTP-binding positions include arginine 313, 339-341 (KLD), and 425-427 (GIG).

Belongs to the adenylosuccinate synthetase family. In terms of assembly, homodimer. The cofactor is Mg(2+).

The protein resides in the cytoplasm. It carries out the reaction IMP + L-aspartate + GTP = N(6)-(1,2-dicarboxyethyl)-AMP + GDP + phosphate + 2 H(+). The protein operates within purine metabolism; AMP biosynthesis via de novo pathway; AMP from IMP: step 1/2. Functionally, plays an important role in the salvage pathway for purine nucleotide biosynthesis. Catalyzes the first committed step in the biosynthesis of AMP from IMP. This chain is Adenylosuccinate synthetase, found in Plasmodium vivax (strain Salvador I).